Here is a 457-residue protein sequence, read N- to C-terminus: Phosphomethylpyrimidine synthase (457 aa).

Substrate contacts are provided by residues Asn80, Met109, Tyr139, His175, 195–197 (SRG), 236–239 (DSLR), and Glu275. Residue His279 coordinates Zn(2+). Tyr302 lines the substrate pocket. His343 provides a ligand contact to Zn(2+). [4Fe-4S] cluster-binding residues include Cys423, Cys426, and Cys431.

Belongs to the ThiC family. The cofactor is [4Fe-4S] cluster.

The enzyme catalyses 5-amino-1-(5-phospho-beta-D-ribosyl)imidazole + S-adenosyl-L-methionine = 4-amino-2-methyl-5-(phosphooxymethyl)pyrimidine + CO + 5'-deoxyadenosine + formate + L-methionine + 3 H(+). Its pathway is cofactor biosynthesis; thiamine diphosphate biosynthesis. Its function is as follows. Catalyzes the synthesis of the hydroxymethylpyrimidine phosphate (HMP-P) moiety of thiamine from aminoimidazole ribotide (AIR) in a radical S-adenosyl-L-methionine (SAM)-dependent reaction. The protein is Phosphomethylpyrimidine synthase of Nostoc punctiforme (strain ATCC 29133 / PCC 73102).